A 79-amino-acid polypeptide reads, in one-letter code: uncharacterized protein (79 aa).

Residues 4–43 (QENEDLRKQLVEASELLKSQAKELKDAHQQQKLALQDFLE) are a coiled coil.

This is an uncharacterized protein from Homo sapiens (Human).